The sequence spans 257 residues: Thiazole synthase (257 aa).

Lys95 acts as the Schiff-base intermediate with DXP in catalysis. 1-deoxy-D-xylulose 5-phosphate contacts are provided by residues Gly156, 182–183 (AG), and 204–205 (NT).

This sequence belongs to the ThiG family. As to quaternary structure, homotetramer. Forms heterodimers with either ThiH or ThiS.

It localises to the cytoplasm. The catalysed reaction is [ThiS sulfur-carrier protein]-C-terminal-Gly-aminoethanethioate + 2-iminoacetate + 1-deoxy-D-xylulose 5-phosphate = [ThiS sulfur-carrier protein]-C-terminal Gly-Gly + 2-[(2R,5Z)-2-carboxy-4-methylthiazol-5(2H)-ylidene]ethyl phosphate + 2 H2O + H(+). It participates in cofactor biosynthesis; thiamine diphosphate biosynthesis. Its function is as follows. Catalyzes the rearrangement of 1-deoxy-D-xylulose 5-phosphate (DXP) to produce the thiazole phosphate moiety of thiamine. Sulfur is provided by the thiocarboxylate moiety of the carrier protein ThiS. In vitro, sulfur can be provided by H(2)S. This Vibrio vulnificus (strain CMCP6) protein is Thiazole synthase.